The chain runs to 871 residues: Probable LRR receptor-like serine/threonine-protein kinase At1g51810 (871 aa).

The N-terminal stretch at methionine 1–alanine 20 is a signal peptide. The Extracellular portion of the chain corresponds to glutamine 21–proline 512. Residues asparagine 93, asparagine 179, asparagine 229, asparagine 283, asparagine 295, asparagine 396, asparagine 410, asparagine 439, asparagine 458, asparagine 463, and asparagine 489 are each glycosylated (N-linked (GlcNAc...) asparagine). 3 LRR repeats span residues isoleucine 405–asparagine 426, asparagine 429–alanine 449, and serine 453–glutamate 474. Residues isoleucine 513–valine 533 traverse the membrane as a helical segment. The Cytoplasmic segment spans residues arginine 534–arginine 871. Threonine 568 is modified (phosphothreonine). In terms of domain architecture, Protein kinase spans asparagine 577 to leucine 850. Residues leucine 583–valine 591 and lysine 605 each bind ATP. Tyrosine 650 is subject to Phosphotyrosine. The Proton acceptor role is filled by aspartate 702. Serine 736 is subject to Phosphoserine. Phosphothreonine occurs at positions 737 and 742. Tyrosine 750 is subject to Phosphotyrosine.

This sequence belongs to the protein kinase superfamily. Ser/Thr protein kinase family.

The protein localises to the membrane. The catalysed reaction is L-seryl-[protein] + ATP = O-phospho-L-seryl-[protein] + ADP + H(+). The enzyme catalyses L-threonyl-[protein] + ATP = O-phospho-L-threonyl-[protein] + ADP + H(+). The polypeptide is Probable LRR receptor-like serine/threonine-protein kinase At1g51810 (Arabidopsis thaliana (Mouse-ear cress)).